The chain runs to 171 residues: Peptide deformylase (171 aa).

2 residues coordinate Fe cation: C87 and H129. Residue E130 is part of the active site. H133 provides a ligand contact to Fe cation.

Belongs to the polypeptide deformylase family. Requires Fe(2+) as cofactor.

The enzyme catalyses N-terminal N-formyl-L-methionyl-[peptide] + H2O = N-terminal L-methionyl-[peptide] + formate. Functionally, removes the formyl group from the N-terminal Met of newly synthesized proteins. Requires at least a dipeptide for an efficient rate of reaction. N-terminal L-methionine is a prerequisite for activity but the enzyme has broad specificity at other positions. This chain is Peptide deformylase, found in Pseudothermotoga lettingae (strain ATCC BAA-301 / DSM 14385 / NBRC 107922 / TMO) (Thermotoga lettingae).